A 131-amino-acid chain; its full sequence is Small ribosomal subunit protein uS11 (131 aa).

Belongs to the universal ribosomal protein uS11 family. Part of the 30S ribosomal subunit. Interacts with proteins S7 and S18. Binds to IF-3.

Located on the platform of the 30S subunit, it bridges several disparate RNA helices of the 16S rRNA. Forms part of the Shine-Dalgarno cleft in the 70S ribosome. This Trichodesmium erythraeum (strain IMS101) protein is Small ribosomal subunit protein uS11.